Consider the following 119-residue polypeptide: Large ribosomal subunit protein bL19 (119 aa).

It belongs to the bacterial ribosomal protein bL19 family.

This protein is located at the 30S-50S ribosomal subunit interface and may play a role in the structure and function of the aminoacyl-tRNA binding site. The sequence is that of Large ribosomal subunit protein bL19 from Pseudarthrobacter chlorophenolicus (strain ATCC 700700 / DSM 12829 / CIP 107037 / JCM 12360 / KCTC 9906 / NCIMB 13794 / A6) (Arthrobacter chlorophenolicus).